Reading from the N-terminus, the 327-residue chain is ATP-dependent 6-phosphofructokinase (327 aa).

Gly12 is an ATP binding site. ADP is bound by residues 22–26 and 55–60; these read RGVVR and RYSVSD. ATP is bound by residues 73-74 and 103-106; these read RF and GDGS. Asp104 is a Mg(2+) binding site. 127-129 is a substrate binding site; it reads TID. Asp129 (proton acceptor) is an active-site residue. Position 156 (Arg156) interacts with ADP. Substrate-binding positions include Arg164 and 171 to 173; that span reads MGR. Residues 187-189, Lys213, and 215-217 each bind ADP; these read GCE and KKH. Substrate contacts are provided by residues Glu224, Arg245, and 251–254; that span reads HIQR.

It belongs to the phosphofructokinase type A (PFKA) family. ATP-dependent PFK group I subfamily. Prokaryotic clade 'B1' sub-subfamily. As to quaternary structure, homotetramer. Requires Mg(2+) as cofactor.

It localises to the cytoplasm. It catalyses the reaction beta-D-fructose 6-phosphate + ATP = beta-D-fructose 1,6-bisphosphate + ADP + H(+). It participates in carbohydrate degradation; glycolysis; D-glyceraldehyde 3-phosphate and glycerone phosphate from D-glucose: step 3/4. Allosterically activated by ADP and other diphosphonucleosides, and allosterically inhibited by phosphoenolpyruvate. In terms of biological role, catalyzes the phosphorylation of D-fructose 6-phosphate to fructose 1,6-bisphosphate by ATP, the first committing step of glycolysis. This Hamiltonella defensa subsp. Acyrthosiphon pisum (strain 5AT) protein is ATP-dependent 6-phosphofructokinase.